Consider the following 313-residue polypeptide: Porphobilinogen deaminase (313 aa).

Cysteine 241 carries the S-(dipyrrolylmethanemethyl)cysteine modification.

Belongs to the HMBS family. As to quaternary structure, monomer. The cofactor is dipyrromethane.

It catalyses the reaction 4 porphobilinogen + H2O = hydroxymethylbilane + 4 NH4(+). It participates in porphyrin-containing compound metabolism; protoporphyrin-IX biosynthesis; coproporphyrinogen-III from 5-aminolevulinate: step 2/4. In terms of biological role, tetrapolymerization of the monopyrrole PBG into the hydroxymethylbilane pre-uroporphyrinogen in several discrete steps. This Idiomarina loihiensis (strain ATCC BAA-735 / DSM 15497 / L2-TR) protein is Porphobilinogen deaminase.